Here is a 453-residue protein sequence, read N- to C-terminus: Transmembrane protease serine 3 (453 aa).

Over Met1–Phe48 the chain is Cytoplasmic. A helical; Signal-anchor for type II membrane protein transmembrane segment spans residues Phe49 to Ile69. Over His70–Thr453 the chain is Extracellular. The LDL-receptor class A domain occupies Asp72–Val108. 10 disulfide bridges follow: Cys73/Cys85, Cys79/Cys98, Cys92/Cys107, Cys129/Cys194, Cys142/Cys204, Cys207/Cys324, Cys242/Cys258, Cys338/Cys406, Cys369/Cys385, and Cys396/Cys424. An SRCR domain is found at Glu104–Ser205. Positions Ile217–Glu448 constitute a Peptidase S1 domain. An N-linked (GlcNAc...) asparagine glycan is attached at Asn221. Active-site charge relay system residues include His257 and Asp304. Ser400 (charge relay system) is an active-site residue.

It belongs to the peptidase S1 family. Undergoes autoproteolytic activation. Strongly expressed in liver, cochlea, brain, cerebellum, spleen, lung, and muscle and at a lower degree in retina, kidney, and heart. Expressed in the spiral ganglion, the cells supporting the organ of Corti and the stria vascularis. Isoform 2 is strongly expressed only in the cochlea with very faint expression in the cerebellum, spleen and muscle.

It is found in the endoplasmic reticulum membrane. In terms of biological role, probable serine protease that plays a role in hearing. Acts as a permissive factor for cochlear hair cell survival and activation at the onset of hearing and is required for saccular hair cell survival. Activates ENaC (in vitro). This chain is Transmembrane protease serine 3 (Tmprss3), found in Mus musculus (Mouse).